The primary structure comprises 351 residues: Cytosolic sulfotransferase 9 (351 aa).

The segment covering 1–11 (MDEKDILRNLR) has biased composition (basic and acidic residues). Positions 1–24 (MDEKDILRNLREEEEEEEENQSEE) are disordered. Acidic residues predominate over residues 12-22 (EEEEEEEENQS). Residue 80–85 (KSGTTW) coordinates 3'-phosphoadenylyl sulfate. Catalysis depends on histidine 152, which acts as the Proton acceptor. 3'-phosphoadenylyl sulfate contacts are provided by residues arginine 174, serine 182, tyrosine 252, and 317 to 319 (RKG).

This sequence belongs to the sulfotransferase 1 family. As to expression, expressed in roots and leaves.

It localises to the cytoplasm. Functionally, sulfotransferase that utilizes 3'-phospho-5'-adenylyl sulfate (PAPS) as sulfonate donor. No activity with brassinosteroids. This is Cytosolic sulfotransferase 9 (STO9) from Arabidopsis thaliana (Mouse-ear cress).